The primary structure comprises 132 residues: Pro-MCH 1 (132 aa).

A signal peptide spans 1–24 (MRHYVLSISFAVALFLECYTPSTA). Cysteine 120 and cysteine 129 form a disulfide bridge.

This sequence belongs to the melanin-concentrating hormone family. Pituitary gland. Produced in neurons of lateral basal hypothalamus which project both to the brain and to the neural lobe of the pituitary gland from where MCH is released.

In terms of biological role, plays a role in skin pigmentation by antagonizing the action of melanotropin alpha. Induces melanin concentration within the melanophores. May participate in the control of the hypothalamo-pituitary adrenal gland axis by inhibiting the release of ACTH. The polypeptide is Pro-MCH 1 (mch1) (Oncorhynchus keta (Chum salmon)).